Here is a 1907-residue protein sequence, read N- to C-terminus: Probable RNA-directed RNA polymerase (1907 aa).

Positions 42–61 (NTHNDHEETHGESPEVPKAS) are disordered. Basic and acidic residues predominate over residues 44–56 (HNDHEETHGESPE).

Belongs to the totiviridae RNA-directed RNA polymerase family.

It catalyses the reaction RNA(n) + a ribonucleoside 5'-triphosphate = RNA(n+1) + diphosphate. Functionally, RNA-dependent RNA polymerase which replicates the viral genome. Catalyzes the transcription of fully conservative plus-strand genomic RNAs that are extruded from the virion into the cytoplasm where they function as mRNAs for translation of viral proteins and also as substrates for encapsidation to form new virions. Once encapsidated, the positive strand is converted to dsRNA by the RNA-directed RNA polymerase. Displays ssRNA-binding activity. This chain is Probable RNA-directed RNA polymerase (gag-pol), found in Giardia intestinalis (Giardia lamblia).